We begin with the raw amino-acid sequence, 756 residues long: Subtilisin-like protease SBT3.9 (756 aa).

The first 25 residues, 1–25 (MSKTILFLALFLSIVLNVQISFVVA), serve as a signal peptide directing secretion. A propeptide spans 26–108 (ESKVYVVYLG…VIPNTLYEMT (83 aa)) (activation peptide). The Inhibitor I9 domain maps to 29-106 (VYVVYLGEKE…VQVIPNTLYE (78 aa)). Residues 112 to 603 (TWDYLGVSPG…GGLINPEKAV (492 aa)) enclose the Peptidase S8 domain. Aspartate 142 (charge relay system) is an active-site residue. Residues asparagine 175 and asparagine 202 are each glycosylated (N-linked (GlcNAc...) asparagine). The Charge relay system role is filled by histidine 218. Asparagine 233, asparagine 357, asparagine 395, and asparagine 519 each carry an N-linked (GlcNAc...) asparagine glycan. Residues 386–460 (DCEKLSANPN…ELGTDILFYI (75 aa)) form the PA domain. Serine 534 acts as the Charge relay system in catalysis.

The protein belongs to the peptidase S8 family.

The protein resides in the secreted. The chain is Subtilisin-like protease SBT3.9 from Arabidopsis thaliana (Mouse-ear cress).